The sequence spans 746 residues: Polyribonucleotide nucleotidyltransferase (746 aa).

Positions 519 and 525 each coordinate Mg(2+). Residues 585-644 form the KH domain; it reads PRVIAVKIPVDKIGEVIGPKGKMINQIQEDTGADISIEDDGTVYIGATNGPSADAARSAI. In terms of domain architecture, S1 motif spans 656 to 728; that stretch reads GERYLGTVVK…DRGKLSLSPV (73 aa).

It belongs to the polyribonucleotide nucleotidyltransferase family. Mg(2+) serves as cofactor.

The protein localises to the cytoplasm. It carries out the reaction RNA(n+1) + phosphate = RNA(n) + a ribonucleoside 5'-diphosphate. In terms of biological role, involved in mRNA degradation. Catalyzes the phosphorolysis of single-stranded polyribonucleotides processively in the 3'- to 5'-direction. This chain is Polyribonucleotide nucleotidyltransferase, found in Arthrobacter sp. (strain FB24).